Here is a 424-residue protein sequence, read N- to C-terminus: Serine--tRNA ligase (424 aa).

232–234 (TAE) contributes to the L-serine binding site. 263–265 (RQE) contacts ATP. E286 serves as a coordination point for L-serine. An ATP-binding site is contributed by 350 to 353 (EIGS). Residue S386 coordinates L-serine.

The protein belongs to the class-II aminoacyl-tRNA synthetase family. Type-1 seryl-tRNA synthetase subfamily. In terms of assembly, homodimer. The tRNA molecule binds across the dimer.

It is found in the cytoplasm. The catalysed reaction is tRNA(Ser) + L-serine + ATP = L-seryl-tRNA(Ser) + AMP + diphosphate + H(+). It carries out the reaction tRNA(Sec) + L-serine + ATP = L-seryl-tRNA(Sec) + AMP + diphosphate + H(+). The protein operates within aminoacyl-tRNA biosynthesis; selenocysteinyl-tRNA(Sec) biosynthesis; L-seryl-tRNA(Sec) from L-serine and tRNA(Sec): step 1/1. Its function is as follows. Catalyzes the attachment of serine to tRNA(Ser). Is also able to aminoacylate tRNA(Sec) with serine, to form the misacylated tRNA L-seryl-tRNA(Sec), which will be further converted into selenocysteinyl-tRNA(Sec). The sequence is that of Serine--tRNA ligase from Aster yellows witches'-broom phytoplasma (strain AYWB).